The primary structure comprises 141 residues: Sperm-associated microtubule inner protein 10 (141 aa).

A compositionally biased stretch (basic and acidic residues) spans 1-16 (MASEKDDGPALPKLDD). The interval 1–33 (MASEKDDGPALPKLDDDNQTAENTCKPAEEQPQ) is disordered.

Microtubule inner protein component of sperm flagellar doublet microtubules. In terms of tissue distribution, expressed predominantly in the testis.

The protein resides in the cytoplasm. The protein localises to the cytoskeleton. It is found in the flagellum axoneme. Its function is as follows. Microtubule inner protein (MIP) part of the dynein-decorated doublet microtubules (DMTs) in flagellum axoneme, which is required for flagellum beating. May serve to reinforce and thus stabilize the microtubule structure in the sperm flagella. Involved in the regulation of sperm motility. This Mus musculus (Mouse) protein is Sperm-associated microtubule inner protein 10 (Spmip10).